A 265-amino-acid polypeptide reads, in one-letter code: Small ribosomal subunit protein uS2 (265 aa).

Belongs to the universal ribosomal protein uS2 family.

This chain is Small ribosomal subunit protein uS2, found in Ligilactobacillus salivarius (strain UCC118) (Lactobacillus salivarius).